We begin with the raw amino-acid sequence, 710 residues long: Choline transporter-like protein 4 (710 aa).

The Cytoplasmic portion of the chain corresponds to 1–34 (MGGKQRDEDDEAYGKPVKYDPSFRGPIKNRSCTD). Residues 35–55 (VICCVLFLLFILGYIVVGIVA) traverse the membrane as a helical segment. Residues 56–229 (WLYGDPRQVL…KIFEDFAQSW (174 aa)) are Extracellular-facing. N-linked (GlcNAc...) asparagine glycosylation is found at Asn69, Asn155, and Asn197. A helical transmembrane segment spans residues 230–250 (YWILVALGVALVLSLLFILLL). The Cytoplasmic portion of the chain corresponds to 251–252 (RL). A helical transmembrane segment spans residues 253-273 (VAGPLVLVLILGVLGVLAYGI). The Extracellular portion of the chain corresponds to 274 to 309 (YYCWEEYRVLRDKGASISQLGFTTNLSAYQSVQETW). A glycan (N-linked (GlcNAc...) asparagine) is linked at Asn298. A helical membrane pass occupies residues 310 to 330 (LAALIVLAVLEAILLLMLIFL). Topologically, residues 331-358 (RQRIRIAIALLKEASKAVGQMMSTMFYP) are cytoplasmic. A helical membrane pass occupies residues 359 to 379 (LVTFVLLLICIAYWAMTALYL). Over 380–455 (ATSGQPQYVL…GVLGLFWTLN (76 aa)) the chain is Extracellular. N-linked (GlcNAc...) asparagine glycans are attached at residues Asn393, Asn405, and Asn416. A helical transmembrane segment spans residues 456 to 476 (WVLALGQCVLAGAFASFYWAF). At 477–501 (HKPQDIPTFPLISAFIRTLRYHTGS) the chain is on the cytoplasmic side. Residues 502-522 (LAFGALILTLVQIARVILEYI) form a helical membrane-spanning segment. Over 523–560 (DHKLRGVQNPVARCIMCCFKCCLWCLEKFIKFLNRNAY) the chain is Extracellular. A helical transmembrane segment spans residues 561-581 (IMIAIYGKNFCVSAKNAFMLL). The Cytoplasmic segment spans residues 582 to 597 (MRNIVRVVVLDKVTDL). The chain crosses the membrane as a helical span at residues 598 to 618 (LLFFGKLLVVGGVGVLSFFFF). Topologically, residues 619–638 (SGRIPGLGKDFKSPHLNYYW) are extracellular. Residues 639–659 (LPIMTSILGAYVIASGFFSVF) traverse the membrane as a helical segment. The Cytoplasmic segment spans residues 660–710 (GMCVDTLFLCFLEDLERNNGSLDRPYYMSKSLLKILGKKNEAPPDNKKRKK).

The protein belongs to the CTL (choline transporter-like) family. N-glycosylated; N-glycosylation of Asn-69, Asn-155 and Asn-393 is required for a proper thiamine pyrophosphate uptake. In terms of tissue distribution, highly expressed in colon, also detected in prostate, trachea and lung. Isoform 3 is also expressed in colon but a lower levels. Expressed in colon at low levels.

It is found in the membrane. Its subcellular location is the apical cell membrane. The catalysed reaction is choline(out) + n H(+)(in) = choline(in) + n H(+)(out). It catalyses the reaction thiamine diphosphate(out) = thiamine diphosphate(in). In terms of biological role, choline transporter that plays a role in the choline-acetylcholine system and is required to the efferent innervation of hair cells in the olivocochlear bundle for the maintenance of physiological function of outer hair cells and the protection of hair cells from acoustic injury. Also described as a thiamine pyrophosphate transporter in colon, may mediate the absorption of microbiota-generated thiamine pyrophosphate and contribute to host thiamine (vitamin B1) homeostasis. Its function is as follows. Also has thiamine pyrophosphate transporter activity. This is Choline transporter-like protein 4 from Homo sapiens (Human).